A 493-amino-acid polypeptide reads, in one-letter code: MASGILVNVKEEVTCPICLELLTQPLSLDCGHSFCQACLTANHKKSMLDKGESSCPVCRISYQPENIRPNRHVANIVEKLREVKLSPEGQKVDHCARHGEKLLLFCQEDGKVICWLCERSQEHRGHHTFLTEEVAREYQVKLQAALEMLRQKQQEAEELEADIREEKASWKTQIQYDKTNVLADFEQLRDILDWEESNELQNLEKEEEDILKSLTNSETEMVQQTQSLRELISDLEHRLQGSVMELLQGVDGVIKRTENVTLKKPETFPKNQRRVFRAPDLKGMLEVFRELTDVRRYWVDVTVAPNNISCAVISEDKRQVSSPKPQIIYGARGTRYQTFVNFNYCTGILGSQSITSGKHYWEVDVSKKTAWILGVCAGFQPDAMCNIEKNENYQPKYGYWVIGLEEGVKCSAFQDSSFHTPSVPFIVPLSVIICPDRVGVFLDYEACTVSFFNITNHGFLIYKFSHCSFSQPVFPYLNPRKCGVPMTLCSPSS.

An N-acetylalanine modification is found at Ala-2. Residues 15–59 (CPICLELLTQPLSLDCGHSFCQACLTANHKKSMLDKGESSCPVCR) form an RING-type zinc finger. Phosphoserine is present on Ser-86. The B box-type zinc finger occupies 90 to 132 (QKVDHCARHGEKLLLFCQEDGKVICWLCERSQEHRGHHTFLTE). Zn(2+) is bound by residues Cys-95, His-98, Cys-117, and His-123. Residues 130 to 241 (LTEEVAREYQ…ISDLEHRLQG (112 aa)) adopt a coiled-coil conformation. The segment at 185–198 (FEQLRDILDWEESN) is required for interaction with GABARAP and for autophagy. A B30.2/SPRY domain is found at 281–493 (LKGMLEVFRE…VPMTLCSPSS (213 aa)).

This sequence belongs to the TRIM/RBCC family. As to quaternary structure, can form homodimers and homotrimers. In addition to lower-order dimerization, also exhibits a higher-order multimerization and both low- and high-order multimerizations are essential for its restriction activity. Isoform Delta interacts with BTBD1 and BTBD2. Interacts with PSMC4, PSMC5, PSMD7 and HSPA8/HSC70. Interacts (via B30.2/SPRY domain) with HSPA1A/B. Interacts with PSMC2, MAP3K7/TAK1, TAB2 and TAB3. Interacts with SQSTM1. Interacts with TRIM6 and TRIM34. Interacts with ULK1 (phosphorylated form), GABARAP, GABARAPL1, GABARAPL2, MAP1LC3A, MAP1LC3C and BECN1. In terms of processing, degraded in a proteasome-independent fashion in the absence of viral infection but in a proteasome-dependent fashion following exposure to restriction sensitive virus. Post-translationally, autoubiquitinated in a RING finger- and UBE2D2-dependent manner. Monoubiquitinated by TRIM21. Deubiquitinated by Yersinia YopJ. Ubiquitination may not lead to proteasomal degradation.

It localises to the cytoplasm. The protein localises to the nucleus. The enzyme catalyses S-ubiquitinyl-[E2 ubiquitin-conjugating enzyme]-L-cysteine + [acceptor protein]-L-lysine = [E2 ubiquitin-conjugating enzyme]-L-cysteine + N(6)-ubiquitinyl-[acceptor protein]-L-lysine.. It functions in the pathway protein modification; protein ubiquitination. In terms of biological role, capsid-specific restriction factor that prevents infection from non-host-adapted retroviruses. Blocks viral replication early in the life cycle, after viral entry but before reverse transcription. In addition to acting as a capsid-specific restriction factor, also acts as a pattern recognition receptor that activates innate immune signaling in response to the retroviral capsid lattice. Binding to the viral capsid triggers its E3 ubiquitin ligase activity, and in concert with the heterodimeric ubiquitin conjugating enzyme complex UBE2V1-UBE2N (also known as UBC13-UEV1A complex) generates 'Lys-63'-linked polyubiquitin chains, which in turn are catalysts in the autophosphorylation of the MAP3K7/TAK1 complex (includes TAK1, TAB2, and TAB3). Activation of the MAP3K7/TAK1 complex by autophosphorylation results in the induction and expression of NF-kappa-B and MAPK-responsive inflammatory genes, thereby leading to an innate immune response in the infected cell. Restricts infection by N-tropic murine leukemia virus (N-MLV), equine infectious anemia virus (EIAV), simian immunodeficiency virus of macaques (SIVmac), feline immunodeficiency virus (FIV), and bovine immunodeficiency virus (BIV). Plays a role in regulating autophagy through activation of autophagy regulator BECN1 by causing its dissociation from its inhibitors BCL2 and TAB2. Also plays a role in autophagy by acting as a selective autophagy receptor which recognizes and targets HIV-1 capsid protein p24 for autophagic destruction. This chain is Tripartite motif-containing protein 5 (TRIM5), found in Homo sapiens (Human).